The sequence spans 479 residues: Glycogen synthase (479 aa).

Lys-15 is an ADP-alpha-D-glucose binding site.

Belongs to the glycosyltransferase 1 family. Bacterial/plant glycogen synthase subfamily.

It catalyses the reaction [(1-&gt;4)-alpha-D-glucosyl](n) + ADP-alpha-D-glucose = [(1-&gt;4)-alpha-D-glucosyl](n+1) + ADP + H(+). Its pathway is glycan biosynthesis; glycogen biosynthesis. Functionally, synthesizes alpha-1,4-glucan chains using ADP-glucose. The sequence is that of Glycogen synthase from Pectobacterium carotovorum subsp. carotovorum (strain PC1).